The following is a 524-amino-acid chain: Na(+)/H(+) antiporter NhaB (524 aa).

A run of 12 helical transmembrane segments spans residues 23 to 43, 44 to 64, 97 to 117, 120 to 140, 144 to 164, 203 to 223, 236 to 256, 304 to 324, 354 to 374, 392 to 412, 448 to 468, and 476 to 496; these read IAILAFLIINPLVFSLSPFYA, GWLLVIEFIFTLAMALKCYPL, LLLIFMVAGIYFMKQLLLFVF, LLLNIRSKIVLSLAFCLAAAF, FLDALTVIAVVISVAVGFYGI, LLMHAGVGTALGGVMTMVGEP, FVSFLLRMAPVTVPVFCCGIL, ALVGVWLVSALAFHLAEVGLI, FTALLTVFFSIVAVIIDQHLF, LFYLFNGLLSSISDNVFVGTV, ATPNGQAAFLFLLTSALAPLI, and VWMALPYTVVMTLVGLLCVIF.

The protein belongs to the NhaB Na(+)/H(+) (TC 2.A.34) antiporter family.

It localises to the cell inner membrane. The enzyme catalyses 2 Na(+)(in) + 3 H(+)(out) = 2 Na(+)(out) + 3 H(+)(in). Functionally, na(+)/H(+) antiporter that extrudes sodium in exchange for external protons. This chain is Na(+)/H(+) antiporter NhaB, found in Edwardsiella ictaluri (strain 93-146).